Consider the following 165-residue polypeptide: Pyruvoyl-dependent arginine decarboxylase 1 (165 aa).

The residue at position 45 (S45) is a Pyruvic acid (Ser).

This sequence belongs to the PdaD family. Pyruvate serves as cofactor.

The enzyme catalyses L-arginine + H(+) = agmatine + CO2. This is Pyruvoyl-dependent arginine decarboxylase 1 (pdaD1) from Methanosarcina acetivorans (strain ATCC 35395 / DSM 2834 / JCM 12185 / C2A).